The chain runs to 341 residues: uncharacterized protein (341 aa).

Active-site residues include serine 111, aspartate 247, and histidine 275.

This sequence belongs to the DmpD/TodF/XylF esterase family.

This is an uncharacterized protein from Mycobacterium bovis (strain ATCC BAA-935 / AF2122/97).